Consider the following 906-residue polypeptide: Formin-like protein 18 (906 aa).

A signal peptide spans 1–25; that stretch reads MSKLRWLIMAFLVCLLLLTPKDLEG. Residues 120 to 140 form a helical membrane-spanning segment; the sequence is MVVVGLSAACVALVTLVGICF. Disordered regions lie at residues 267–416 and 854–906; these read AGGG…QADP and NAKA…DSDD. Over residues 274–292 the composition is skewed to pro residues; it reads AAPPPPAGPPPPAPPPLPP. Residues 293–303 are compositionally biased toward basic residues; sequence SHHHHHGHHPP. Pro residues-rich tracts occupy residues 320-339, 348-375, and 383-402; these read APPP…PAPS, GPPP…PPPG, and GPPP…PPFK. 2 stretches are compositionally biased toward low complexity: residues 403–416 and 854–877; these read KSPG…QADP and NAKA…QSSF. The FH2 domain occupies 411–866; that stretch reads AAQADPNKAK…AKKQQQPTPA (456 aa). The segment covering 878-889 has biased composition (basic and acidic residues); that stretch reads RDPRQQIQDRRA. Residues 897 to 906 show a composition bias toward low complexity; sequence SSSSSSDSDD.

The protein belongs to the formin-like family. Class-I subfamily.

Its subcellular location is the membrane. This is Formin-like protein 18 (FH18) from Oryza sativa subsp. japonica (Rice).